The primary structure comprises 479 residues: Rifampicin monooxygenase (479 aa).

Positions 12, 31, 32, 41, 98, 122, 156, 278, 291, and 292 each coordinate FAD.

Belongs to the rifampicin monooxygenase family. It depends on FAD as a cofactor.

It catalyses the reaction rifampicin + NADPH + O2 = rifampicin para-naphthoquinone carboxamide + NADP(+) + H2O + H(+). The catalysed reaction is rifampicin + NADH + O2 = rifampicin para-naphthoquinone carboxamide + NAD(+) + H2O + H(+). In terms of biological role, monooxygenase that can modify rifampicin, thereby inactivating its antibiotic activity. In Rhodococcus hoagii (Corynebacterium equii), this protein is Rifampicin monooxygenase.